Reading from the N-terminus, the 550-residue chain is Probable terpene synthase 2 (550 aa).

Mg(2+) contacts are provided by Asp305, Asp309, and Glu457. The short motif at Asp305–Asp309 is the DDXXD motif element.

This sequence belongs to the terpene synthase family. Requires Mg(2+) as cofactor.

Its function is as follows. Probable sesquiterpene synthase. This chain is Probable terpene synthase 2 (TPS2), found in Ricinus communis (Castor bean).